The following is a 368-amino-acid chain: Phosphoribosylformylglycinamidine cyclo-ligase (368 aa).

Belongs to the AIR synthase family.

It localises to the cytoplasm. The catalysed reaction is 2-formamido-N(1)-(5-O-phospho-beta-D-ribosyl)acetamidine + ATP = 5-amino-1-(5-phospho-beta-D-ribosyl)imidazole + ADP + phosphate + H(+). The protein operates within purine metabolism; IMP biosynthesis via de novo pathway; 5-amino-1-(5-phospho-D-ribosyl)imidazole from N(2)-formyl-N(1)-(5-phospho-D-ribosyl)glycinamide: step 2/2. This is Phosphoribosylformylglycinamidine cyclo-ligase from Chelativorans sp. (strain BNC1).